A 441-amino-acid polypeptide reads, in one-letter code: Ribosomal protein uS12 methylthiotransferase RimO (441 aa).

The 111-residue stretch at 8–118 (PKIGFVSLGC…VLEHVHHYVP (111 aa)) folds into the MTTase N-terminal domain. [4Fe-4S] cluster-binding residues include Cys17, Cys53, Cys82, Cys150, Cys154, and Cys157. Residues 136 to 373 (LTPRHYAYLK…MQLQQQISAE (238 aa)) form the Radical SAM core domain. The TRAM domain maps to 376 to 441 (QEKVGKEILV…DEYDLWGSRV (66 aa)).

Belongs to the methylthiotransferase family. RimO subfamily. [4Fe-4S] cluster is required as a cofactor.

The protein localises to the cytoplasm. It carries out the reaction L-aspartate(89)-[ribosomal protein uS12]-hydrogen + (sulfur carrier)-SH + AH2 + 2 S-adenosyl-L-methionine = 3-methylsulfanyl-L-aspartate(89)-[ribosomal protein uS12]-hydrogen + (sulfur carrier)-H + 5'-deoxyadenosine + L-methionine + A + S-adenosyl-L-homocysteine + 2 H(+). Functionally, catalyzes the methylthiolation of an aspartic acid residue of ribosomal protein uS12. This is Ribosomal protein uS12 methylthiotransferase RimO from Escherichia fergusonii (strain ATCC 35469 / DSM 13698 / CCUG 18766 / IAM 14443 / JCM 21226 / LMG 7866 / NBRC 102419 / NCTC 12128 / CDC 0568-73).